A 483-amino-acid polypeptide reads, in one-letter code: Altronate oxidoreductase (483 aa).

Residue 18–29 participates in NAD(+) binding; that stretch reads IIQFGEGNFLRA.

It belongs to the mannitol dehydrogenase family. UxaB subfamily.

The catalysed reaction is D-altronate + NAD(+) = keto-D-tagaturonate + NADH + H(+). It participates in carbohydrate metabolism; pentose and glucuronate interconversion. In Escherichia coli O7:K1 (strain IAI39 / ExPEC), this protein is Altronate oxidoreductase.